A 469-amino-acid polypeptide reads, in one-letter code: RuvB-like helicase 2 (469 aa).

73–80 (GEPGTGKT) is an ATP binding site.

It belongs to the RuvB family. Forms homohexameric rings. May form a dodecamer with rvb1 made of two stacked hexameric rings. Component of the chromatin remodeling Ino80 complex. Component of the RNA polymerase II holoenzyme complex.

It is found in the nucleus. It carries out the reaction ATP + H2O = ADP + phosphate + H(+). Its function is as follows. Has double-stranded DNA-stimulated ATPase and ATP-dependent DNA helicase (5' to 3') activity suggesting a role in nuclear processes such as recombination and transcription. Functionally, proposed core component of the chromatin remodeling Ino80 complex which is involved in transcriptional regulation, DNA replication and probably DNA repair. The chain is RuvB-like helicase 2 (rvb2) from Dictyostelium discoideum (Social amoeba).